Reading from the N-terminus, the 442-residue chain is Prenyltransferase nscD (442 aa).

The protein belongs to the tryptophan dimethylallyltransferase family.

It participates in secondary metabolite biosynthesis. Prenyltransferase; part of the gene cluster that mediates the biosynthesis of neosartoricin B, a prenylated anthracenone that probably exhibits T-cell antiproliferative activity, suggestive of a physiological role as an immunosuppressive agent. The non-reducing polyketide synthase nscA probably synthesizes and cyclizes the decaketide backbone. The hydrolase nscB then mediates the product release through hydrolysis followed by spontaneous decarboxylation. The prenyltransferase nscD catalyzes the addition of the dimethylallyl group to the aromatic C5. The FAD-dependent monooxygenase nscC is then responsible for the stereospecific hydroxylation at C2. Neosartoricin B can be converted into two additional compounds neosartoricins C and D. Neosartoricin C is a spirocyclic compound that is cyclized through the attack of C3 hydroxyl on C14, followed by dehydration. On the other hand, neosartoricin D is a further cyclized compound in which attack of C2 on C14 in neosartoricin C results in the formation of the acetal-containing dioxabicyclo-octanone ring. Both of these compounds are novel and possibly represent related metabolites of the gene cluster. The chain is Prenyltransferase nscD from Trichophyton verrucosum (strain HKI 0517).